Reading from the N-terminus, the 174-residue chain is Shikimate kinase 2 (174 aa).

12–17 (GCGKTT) is an ATP binding site. Thr-16 and Asp-32 together coordinate Mg(2+). Residues Asp-34, Arg-58, and Gly-79 each contribute to the substrate site. Residues 112 to 126 (QAAPEEDLRPTLTGK) are LID domain. Arg-120 is an ATP binding site. Residue Arg-139 coordinates substrate.

The protein belongs to the shikimate kinase family. AroL subfamily. In terms of assembly, monomer. Mg(2+) is required as a cofactor.

Its subcellular location is the cytoplasm. It catalyses the reaction shikimate + ATP = 3-phosphoshikimate + ADP + H(+). The protein operates within metabolic intermediate biosynthesis; chorismate biosynthesis; chorismate from D-erythrose 4-phosphate and phosphoenolpyruvate: step 5/7. In terms of biological role, catalyzes the specific phosphorylation of the 3-hydroxyl group of shikimic acid using ATP as a cosubstrate. The protein is Shikimate kinase 2 of Escherichia coli O7:K1 (strain IAI39 / ExPEC).